A 295-amino-acid polypeptide reads, in one-letter code: Oxidoreductase AN1597 (295 aa).

Belongs to the asaB hydroxylase/desaturase family.

It participates in secondary metabolite biosynthesis; terpenoid biosynthesis. Functionally, oxidoreductase; part of the gene cluster that mediates the biosynthesis of the diterpene ent-pimara-8(14),15-diene (PD). Within the cluster, the HMG-CoA reductase AN1593 functions in the mevalonate pathway, which produces isoprenoid precursors. The geranylgeranyl pyrophosphate (GGPP) synthase AN1592 is needed in the formation of GGPP, the precursor for diterpenes. Lastly, the pimaradiene synthase pbcA performs the 2 cyclization steps that convert GGPP to ent-pimara-8(14),15-diene. The putative roles of the remaining cluster enzymes in ent-pimara-8(14),15-diene biosynthesis is unclear. The cytochrome P450 monooxygenase AN1598, the glutathione S-transferase AN1595, the oxidoreductases AN1596 and AN1597 probably function as decorative enzymes. It is possible that in biological conditions the compound is oxidized to ent-pimara-8(14),15-dien-19-oic acid, which is a bioactive diterpene compound predominant in many plant extracts. This Emericella nidulans (strain FGSC A4 / ATCC 38163 / CBS 112.46 / NRRL 194 / M139) (Aspergillus nidulans) protein is Oxidoreductase AN1597.